We begin with the raw amino-acid sequence, 490 residues long: Glucose-6-phosphate 1-dehydrogenase (490 aa).

Residues Arg49, 91 to 92 (DV), and Lys146 each bind NADP(+). The substrate site is built by His176, Lys180, Glu214, and Asp233. His238 functions as the Proton acceptor in the catalytic mechanism. 2 residues coordinate substrate: Lys338 and Lys343.

It belongs to the glucose-6-phosphate dehydrogenase family.

The enzyme catalyses D-glucose 6-phosphate + NADP(+) = 6-phospho-D-glucono-1,5-lactone + NADPH + H(+). It participates in carbohydrate degradation; pentose phosphate pathway; D-ribulose 5-phosphate from D-glucose 6-phosphate (oxidative stage): step 1/3. Catalyzes the oxidation of glucose 6-phosphate to 6-phosphogluconolactone. The polypeptide is Glucose-6-phosphate 1-dehydrogenase (Buchnera aphidicola subsp. Schizaphis graminum (strain Sg)).